The following is a 422-amino-acid chain: UDP-N-acetylglucosamine 1-carboxyvinyltransferase (422 aa).

Phosphoenolpyruvate is bound at residue 22–23; that stretch reads KN. A UDP-N-acetyl-alpha-D-glucosamine-binding site is contributed by Arg-93. Cys-117 acts as the Proton donor in catalysis. Residue Cys-117 is modified to 2-(S-cysteinyl)pyruvic acid O-phosphothioketal. Residues 122–126, Asp-308, and Leu-330 contribute to the UDP-N-acetyl-alpha-D-glucosamine site; that span reads RPVDL.

This sequence belongs to the EPSP synthase family. MurA subfamily.

It is found in the cytoplasm. The catalysed reaction is phosphoenolpyruvate + UDP-N-acetyl-alpha-D-glucosamine = UDP-N-acetyl-3-O-(1-carboxyvinyl)-alpha-D-glucosamine + phosphate. The protein operates within cell wall biogenesis; peptidoglycan biosynthesis. Cell wall formation. Adds enolpyruvyl to UDP-N-acetylglucosamine. The chain is UDP-N-acetylglucosamine 1-carboxyvinyltransferase from Helicobacter pylori (strain Shi470).